Reading from the N-terminus, the 212-residue chain is Probable transaldolase (212 aa).

Lys84 (schiff-base intermediate with substrate) is an active-site residue.

It belongs to the transaldolase family. Type 3B subfamily.

The protein localises to the cytoplasm. It carries out the reaction D-sedoheptulose 7-phosphate + D-glyceraldehyde 3-phosphate = D-erythrose 4-phosphate + beta-D-fructose 6-phosphate. It participates in carbohydrate degradation; pentose phosphate pathway; D-glyceraldehyde 3-phosphate and beta-D-fructose 6-phosphate from D-ribose 5-phosphate and D-xylulose 5-phosphate (non-oxidative stage): step 2/3. Functionally, transaldolase is important for the balance of metabolites in the pentose-phosphate pathway. This chain is Probable transaldolase, found in Bacillus velezensis (strain DSM 23117 / BGSC 10A6 / LMG 26770 / FZB42) (Bacillus amyloliquefaciens subsp. plantarum).